The following is a 329-amino-acid chain: MATIHFTKVHGSQNDFFLVDEEGNQIMDWSDAKRADFAIKLCDREHSLGGADGILYVTKSSEAGPIGQMRVVNSDGSIASMCGNGLRTVARYLLEKHALTEAKVETMKAILDVKKATSLGFDIPTYQVEISPVKFNAESLPMNVGVEKLFNQVVPELDAELAFSAVSVPNPHLITFVDQTVLDSDRQETLASYLNSENPYFPDGVNVSFVKRLSDDAIYVRTFERGVGFTNACGTAMSACSLIKKMLDKDTFETPLNVYNDGGRVQVTAKKDEAGDISLQLIGNATFVSTGSVSYESDTVTELTNEATPEQAQYQELVKEVKEFLKTTE.

Substrate-binding residues include N14 and N73. The active-site Proton donor is the C82. Substrate contacts are provided by residues 83 to 84 (GN), N170, N206, and 224 to 225 (ER). C233 serves as the catalytic Proton acceptor. Residue 234–235 (GT) coordinates substrate.

It belongs to the diaminopimelate epimerase family. Homodimer.

The protein localises to the cytoplasm. It carries out the reaction (2S,6S)-2,6-diaminopimelate = meso-2,6-diaminopimelate. The protein operates within amino-acid biosynthesis; L-lysine biosynthesis via DAP pathway; DL-2,6-diaminopimelate from LL-2,6-diaminopimelate: step 1/1. Its function is as follows. Catalyzes the stereoinversion of LL-2,6-diaminopimelate (L,L-DAP) to meso-diaminopimelate (meso-DAP), a precursor of L-lysine and an essential component of the bacterial peptidoglycan. This chain is Diaminopimelate epimerase, found in Listeria monocytogenes serovar 1/2a (strain ATCC BAA-679 / EGD-e).